The following is a 426-amino-acid chain: MEATAASTSLPDPGDFDRNVPRICGVCGDRATGFHFNAMTCEGCKGFFRRSMKRKALFTCPFNGDCRITKDNRRHCQACRLKRCIDIGMMKEFILTDEEVQRKREMILKRKEEEALKDSLRPKLSEEQQRIITTLLEAHHKTYDDTYSDFSQFRPPVRNSEDEGNRPLRSILTPSFSGNSSSSCSDHCTSSPDTMEPTSFSNQDLNEEDSDDPSVTLDLSQLSMLPHLADLVSYSIQKVIGFAKMIPGFRDLTPEDQIVLLKSSAIEVIMLRSNQSFTLDDDMSWTCGSPDYKYQVSDVTRAGHSLELIEPLIKFQVGLKKLNLHEEEHVLLMAICIVSPDRPGVQDAALVEAIQDRLSNTLQTYIRCRHPPPGSHLLYAKMIQKLADLRSLNEEHSKQYRCLSFQPESSMKLTPLLFEVFGNEIS.

A DNA-binding region (nuclear receptor) is located at residues 21 to 96 (PRICGVCGDR…IGMMKEFILT (76 aa)). Residues cysteine 24, cysteine 27, cysteine 41, cysteine 44, cysteine 60, cysteine 66, cysteine 76, and cysteine 79 each contribute to the Zn(2+) site. 2 NR C4-type zinc fingers span residues 24–44 (CGVCGDRATGFHFNAMTCEGC) and 60–84 (CPFNGDCRITKDNRRHCQACRLKRC). Positions 97-126 (DEEVQRKREMILKRKEEEALKDSLRPKLSE) are hinge. Residues 127-422 (EQQRIITTLL…LTPLLFEVFG (296 aa)) form the NR LBD domain. Tyrosine 143 lines the calcitriol pocket. The interval 147 to 215 (YSDFSQFRPP…NEEDSDDPSV (69 aa)) is disordered. The segment covering 175–191 (SFSGNSSSSCSDHCTSS) has biased composition (low complexity). Over residues 192 to 204 (PDTMEPTSFSNQD) the composition is skewed to polar residues. Serine 235 contributes to the calcitriol binding site. Residues 244-262 (KMIPGFRDLTPEDQIVLLK) are interaction with coactivator LXXLL motif. Calcitriol contacts are provided by arginine 272, serine 276, histidine 304, and histidine 396. Residues 415–423 (PLLFEVFGN) carry the 9aaTAD motif.

It belongs to the nuclear hormone receptor family. NR1 subfamily. As to quaternary structure, homodimer in the absence of bound vitamin D3. Heterodimer with RXRA after vitamin D3 binding. Interacts with MED1, NCOA1, NCOA2, NCOA3 and NCOA6 coactivators, leading to a strong increase of transcription of target genes. Interacts with the corepressor NCOR1. Interacts with SNW1. Interacts with IRX4, the interaction does not affect its transactivation activity. Interacts with CRY1. Interacts with CRY2 in a ligand-dependent manner. Ubiquitinated by UBR5, leading to its degradation: UBR5 specifically recognizes and binds ligand-bound VDR when it is not associated with coactivators (NCOAs). In presence of NCOAs, the UBR5-degron is not accessible, preventing its ubiquitination and degradation. Mammary gland, expression increases during lactation. Also found in colon, expression is down-regulated at parturition.

Its subcellular location is the nucleus. The protein localises to the cytoplasm. Nuclear receptor for calcitriol, the active form of vitamin D3 which mediates the action of this vitamin on cells. Enters the nucleus upon vitamin D3 binding where it forms heterodimers with the retinoid X receptor/RXR. The VDR-RXR heterodimers bind to specific response elements on DNA and activate the transcription of vitamin D3-responsive target genes. Plays a central role in calcium homeostasis. Also functions as a receptor for the secondary bile acid lithocholic acid (LCA) and its metabolites. The chain is Vitamin D3 receptor (VDR) from Bos taurus (Bovine).